A 455-amino-acid polypeptide reads, in one-letter code: Rhodopsin (455 aa).

At 1 to 34 (MVESTTLVNQTWWYNPTVDIHPHWAKFDPIPDAV) the chain is on the extracellular side. N9 is a glycosylation site (N-linked (GlcNAc...) asparagine). The helical transmembrane segment at 35–59 (YYSVGIFIGVVGIIGILGNGVVIYL) threads the bilayer. Residues 60-71 (FSKTKSLQTPAN) lie on the Cytoplasmic side of the membrane. A helical transmembrane segment spans residues 72-98 (MFIINLAMSDLSFSAINGFPLKTISAF). Residues 99–110 (MKKWIFGKVACQ) are Extracellular-facing. The cysteines at positions 109 and 187 are disulfide-linked. A helical transmembrane segment spans residues 111 to 132 (LYGLLGGIFGFMSINTMAMISI). A 'Ionic lock' involved in activated form stabilization motif is present at residues 133–135 (DRY). Over 133-152 (DRYNVIGRPMAASKKMSHRR) the chain is Cytoplasmic. The helical transmembrane segment at 153 to 173 (AFLMIIFVWMWSIVWSVGPVF) threads the bilayer. The Extracellular portion of the chain corresponds to 174 to 200 (NWGAYVPEGILTSCSFDYLSTDPSTRS). A helical transmembrane segment spans residues 201 to 225 (FILCMYFCGFMLPIIIIAFCYFNIV). Residues 226–262 (MSVSNHEKEMAAMAKRLNAKELRKAQAGASAEMKLAK) are Cytoplasmic-facing. The helical transmembrane segment at 263–284 (ISMVIITQFMLSWSPYAIIALL) threads the bilayer. Residues 285-294 (AQFGPAEWVT) are Extracellular-facing. A helical transmembrane segment spans residues 295–316 (PYAAELPVLFAKASAIHNPIVY). Position 306 is an N6-(retinylidene)lysine (K306). The Cytoplasmic portion of the chain corresponds to 317–455 (SVSHPKFREA…QGVDNQAYQA (139 aa)). 2 S-palmitoyl cysteine lipidation sites follow: C337 and C338. Positions 378-387 (QKMQAQQAAY) are enriched in low complexity. Residues 378–455 (QKMQAQQAAY…QGVDNQAYQA (78 aa)) are disordered. A compositionally biased stretch (pro residues) spans 388-433 (QPPPPPQGYPPQGYPPQGAYPPPQGYPPQGYPPQGYPPQGYPPQGA). 6 consecutive repeat copies span residues 395 to 399 (GYPPQ), 400 to 404 (GYPPQ), 412 to 416 (GYPPQ), 417 to 421 (GYPPQ), 422 to 426 (GYPPQ), and 427 to 431 (GYPPQ). The segment at 395–431 (GYPPQGYPPQGAYPPPQGYPPQGYPPQGYPPQGYPPQ) is 6 X 5 AA repeats of G-Y-P-P-Q.

The protein belongs to the G-protein coupled receptor 1 family. Opsin subfamily. Contains one covalently linked retinal chromophore. Upon light absorption, the covalently bound 11-cis-retinal is converted to all-trans-retinal. After hydrolysis of the Schiff base and release of the covalently bound all-trans-retinal, active rhodopsin is regenerated by binding of a fresh molecule of 11-cis-retinal.

The protein localises to the cell projection. The protein resides in the rhabdomere membrane. Its function is as follows. Photoreceptor required for image-forming vision at low light intensity. Light-induced isomerization of 11-cis to all-trans retinal triggers a conformational change that activates signaling via G-proteins. Signaling mediates the activation of phospholipase C. Subsequent receptor phosphorylation mediates displacement of the bound G-protein alpha subunit by arrestin and terminates signaling. In Enteroctopus dofleini (North Pacific giant octopus), this protein is Rhodopsin (RHO).